The chain runs to 287 residues: Acetylglutamate kinase (287 aa).

Substrate is bound by residues 64-65 (GG), Arg86, and Asn185.

The protein belongs to the acetylglutamate kinase family. ArgB subfamily.

The protein resides in the cytoplasm. The enzyme catalyses N-acetyl-L-glutamate + ATP = N-acetyl-L-glutamyl 5-phosphate + ADP. It participates in amino-acid biosynthesis; L-arginine biosynthesis; N(2)-acetyl-L-ornithine from L-glutamate: step 2/4. Its function is as follows. Catalyzes the ATP-dependent phosphorylation of N-acetyl-L-glutamate. This is Acetylglutamate kinase from Hydrogenobaculum sp. (strain Y04AAS1).